The sequence spans 510 residues: uncharacterized protein (510 aa).

A run of 12 helical transmembrane segments spans residues 17–37 (LKLG…LVVL), 56–76 (LIIH…ASVW), 111–131 (VLYI…ISPL), 148–168 (IVFI…AINI), 180–200 (LVNV…VCFG), 223–243 (LLFW…LIFI), 261–281 (FYLF…FGHI), 300–320 (YLGG…LVLM), 355–375 (IIKT…LIAI), 382–402 (LVIP…CMGY), 434–454 (AIYL…FSGI), and 472–492 (LLMG…LMFV).

To A.aeolicus AQ_155.

The protein localises to the cell membrane. This is an uncharacterized protein from Rickettsia prowazekii (strain Madrid E).